Reading from the N-terminus, the 537-residue chain is 2-succinyl-5-enolpyruvyl-6-hydroxy-3-cyclohexene-1-carboxylate synthase (537 aa).

Belongs to the TPP enzyme family. MenD subfamily. Homodimer. The cofactor is Mg(2+). Requires Mn(2+) as cofactor. Thiamine diphosphate serves as cofactor.

The catalysed reaction is isochorismate + 2-oxoglutarate + H(+) = 5-enolpyruvoyl-6-hydroxy-2-succinyl-cyclohex-3-ene-1-carboxylate + CO2. Its pathway is quinol/quinone metabolism; 1,4-dihydroxy-2-naphthoate biosynthesis; 1,4-dihydroxy-2-naphthoate from chorismate: step 2/7. It functions in the pathway quinol/quinone metabolism; menaquinone biosynthesis. Functionally, catalyzes the thiamine diphosphate-dependent decarboxylation of 2-oxoglutarate and the subsequent addition of the resulting succinic semialdehyde-thiamine pyrophosphate anion to isochorismate to yield 2-succinyl-5-enolpyruvyl-6-hydroxy-3-cyclohexene-1-carboxylate (SEPHCHC). This is 2-succinyl-5-enolpyruvyl-6-hydroxy-3-cyclohexene-1-carboxylate synthase from Nocardioides sp. (strain ATCC BAA-499 / JS614).